A 415-amino-acid chain; its full sequence is 2-oxoadipate dioxygenase/decarboxylase (415 aa).

The 2-oxoadipate site is built by His66, Arg70, and His225. Position 66 (His66) interacts with Fe(2+). Residues His225 and Glu296 each contribute to the Fe(2+) site. Residue Ala361 participates in 2-oxoadipate binding.

It belongs to the 2-oxoadipate dioxygenase/decarboxylase family. The cofactor is Fe(2+).

The enzyme catalyses 2-oxoadipate + O2 = (R)-2-hydroxyglutarate + CO2. Its function is as follows. Catalyzes the decarboxylation and hydroxylation of 2-oxoadipate (2OA) to form D-2-hydroxyglutarate (D-2-HGA). The chain is 2-oxoadipate dioxygenase/decarboxylase from Mycobacterium bovis (strain ATCC BAA-935 / AF2122/97).